The following is a 284-amino-acid chain: MKVMTTIQALTAEIQAAKQAHKTIGLVPTMGYLHEGHLTLAQTARAENDLVVMSIFVNPTQFGPNEDFESYPRDLPRDIALAESVGVDLVFAPSVEEMYPQDGGIRIHAGEQATILCGASRPGHFDGVLQVVAKLFHLTLPTRAYFGQKDAQQVAIITTMVRDFNFPLDMRVVPIVREEDGLAKSSRNIYLSESEREEAPAIHEALQLARDSFLATGDVREALAKAKAHIQIQTHGRIDYIELLAYPDLTPVTETTQQVLLAAAVYIGKTRLIDNSIFTVKEGL.

30–37 contributes to the ATP binding site; the sequence is MGYLHEGH. H37 serves as the catalytic Proton donor. Q61 is a (R)-pantoate binding site. Position 61 (Q61) interacts with beta-alanine. Position 147 to 150 (147 to 150) interacts with ATP; the sequence is GQKD. Residue Q153 coordinates (R)-pantoate. ATP is bound by residues V176 and 184–187; that span reads KSSR.

The protein belongs to the pantothenate synthetase family. In terms of assembly, homodimer.

The protein localises to the cytoplasm. The catalysed reaction is (R)-pantoate + beta-alanine + ATP = (R)-pantothenate + AMP + diphosphate + H(+). It participates in cofactor biosynthesis; (R)-pantothenate biosynthesis; (R)-pantothenate from (R)-pantoate and beta-alanine: step 1/1. Functionally, catalyzes the condensation of pantoate with beta-alanine in an ATP-dependent reaction via a pantoyl-adenylate intermediate. This chain is Pantothenate synthetase, found in Lysinibacillus sphaericus (strain C3-41).